Consider the following 392-residue polypeptide: Small ribosomal subunit protein uS9m (392 aa).

Positions 8 to 25 (RSSRAMSSASPASASDSD) are enriched in low complexity. A disordered region spans residues 8-27 (RSSRAMSSASPASASDSDTS).

The protein belongs to the universal ribosomal protein uS9 family. As to quaternary structure, component of the mitochondrial ribosome small subunit (28S) which comprises a 12S rRNA and about 30 distinct proteins.

Its subcellular location is the mitochondrion. The protein is Small ribosomal subunit protein uS9m (mrps-9) of Caenorhabditis elegans.